A 564-amino-acid chain; its full sequence is Protein NRT1/ PTR FAMILY 5.16 (564 aa).

The next 2 membrane-spanning stretches (helical) occupy residues 49–69 (FAYF…LGQS) and 80–100 (WSGT…AYLG). Thr104 is subject to Phosphothreonine. The next 10 membrane-spanning stretches (helical) occupy residues 110 to 130 (LIYI…LMGL), 145 to 165 (FFWV…GQGG), 192 to 212 (FFNW…IVVV), 220 to 240 (WALG…LFLF), 327 to 347 (IPIW…ATFF), 358 to 378 (ILPG…LSIF), 408 to 428 (IGAG…VEMK), 450 to 470 (IWWF…SLVG), 486 to 506 (IGLA…GFLI), and 533 to 553 (YFYW…LLLS).

This sequence belongs to the major facilitator superfamily. Proton-dependent oligopeptide transporter (POT/PTR) (TC 2.A.17) family. Expressed in shoots and roots.

Its subcellular location is the membrane. The polypeptide is Protein NRT1/ PTR FAMILY 5.16 (NPF5.16) (Arabidopsis thaliana (Mouse-ear cress)).